The chain runs to 63 residues: Protein Wfdc21 (63 aa).

The first 24 residues, 1–24, serve as a signal peptide directing secretion; sequence MKLGAFLLLVSLITLSLEVQELQA. The 39-residue stretch at 25 to 63 folds into the WAP; atypical domain; the sequence is AVRPLQLLGTCAELCRGDWDCGPEEQCVSIGCSHICTTN. Intrachain disulfides connect C35-C56, C39-C51, and C45-C60.

In terms of tissue distribution, predominantly expressed in white adipose tissue and liver.

It localises to the secreted. In terms of biological role, may promote activation of the metalloproteinase MMP2. The sequence is that of Protein Wfdc21 from Mus musculus (Mouse).